A 207-amino-acid chain; its full sequence is Non-structural protein 5 (207 aa).

Residues D2 to E69 form the DRBM domain.

The polypeptide is Non-structural protein 5 (Segment-12) (Banna virus (BAV)).